We begin with the raw amino-acid sequence, 114 residues long: Anti-sigma-B factor antagonist (114 aa).

The STAS domain maps to 4–114 (SIEIKERDTD…VEGEMNGNNA (111 aa)). At S58 the chain carries Phosphoserine.

This sequence belongs to the anti-sigma-factor antagonist family. Post-translationally, phosphorylated by RsbW on a serine residue.

Its function is as follows. Positive regulator of sigma-B activity. Non-phosphorylated RsbV binds to RsbW, preventing its association with sigma-B. When phosphorylated, releases RsbW, which is then free to complex with and inactivate sigma-B. In Listeria innocua serovar 6a (strain ATCC BAA-680 / CLIP 11262), this protein is Anti-sigma-B factor antagonist (rsbV).